The following is a 107-amino-acid chain: ATP-dependent Clp protease adapter protein ClpS (107 aa).

The protein belongs to the ClpS family. Binds to the N-terminal domain of the chaperone ClpA.

Functionally, involved in the modulation of the specificity of the ClpAP-mediated ATP-dependent protein degradation. The protein is ATP-dependent Clp protease adapter protein ClpS of Acinetobacter baylyi (strain ATCC 33305 / BD413 / ADP1).